The following is a 114-amino-acid chain: MIKGLAITVVAVLAVVQLLARPSDAAVSCGQVDTSLTPCLTYLTKGGTPSTQCCSGVRSLKSMTGTKADRQAACNCLKQAAARYQGIKDAAAAALSQKCGVQLSVPISRKTDCS.

The N-terminal stretch at 1-25 is a signal peptide; that stretch reads MIKGLAITVVAVLAVVQLLARPSDA. 4 disulfides stabilise this stretch: cysteine 29–cysteine 76, cysteine 39–cysteine 53, cysteine 54–cysteine 99, and cysteine 74–cysteine 113.

It belongs to the plant LTP family. In terms of tissue distribution, expressed in seeds and, at very low levels, in pulp of fruit (at protein level).

Its function is as follows. Plant non-specific lipid-transfer proteins transfer phospholipids as well as galactolipids across membranes. May play a role in wax or cutin deposition in the cell walls of expanding epidermal cells and certain secretory tissues. This is Non-specific lipid-transfer protein 1 from Actinidia chinensis var. chinensis (Chinese soft-hair kiwi).